A 259-amino-acid chain; its full sequence is Ras-related protein Rab-34 (259 aa).

Met1 carries the post-translational modification N-acetylmethionine. Ser62, Val63, Gly64, Lys65, Thr66, Asp78, Tyr81, and Thr84 together coordinate GTP. Thr66 is a binding site for Mg(2+). Positions 71–89 (RFCKDTFDKNYKATIGVDF) match the Switch 1 motif. Residues Thr84 and Asp107 each contribute to the Mg(2+) site. Positions 108-127 (TAGQERFKCIASTYYRGAQA) match the Switch 2 motif. GTP-binding residues include Gly110, Lys167, Asp169, and Ser198. A phosphoserine mark is found at Ser241 and Ser244. 2 S-geranylgeranyl cysteine lipidation sites follow: Cys257 and Cys258.

The protein belongs to the small GTPase superfamily. Rab family. As to quaternary structure, interacts with RILP. The GTP-bound form interacts with REP15. The cofactor is Mg(2+).

It localises to the cytoplasm. It is found in the golgi apparatus. Its subcellular location is the cytoplasmic vesicle. The protein localises to the phagosome. The protein resides in the phagosome membrane. It localises to the cell projection. It is found in the cilium. Its subcellular location is the cytoskeleton. The protein localises to the microtubule organizing center. The protein resides in the centrosome. It localises to the centriole. The catalysed reaction is GTP + H2O = GDP + phosphate + H(+). With respect to regulation, regulated by guanine nucleotide exchange factors (GEFs) which promote the exchange of bound GDP for free GTP. Regulated by GTPase activating proteins (GAPs) which increase the GTP hydrolysis activity. Inhibited by GDP dissociation inhibitors (GDIs). Functionally, the small GTPases Rab are key regulators of intracellular membrane trafficking, from the formation of transport vesicles to their fusion with membranes. Rabs cycle between an inactive GDP-bound form and an active GTP-bound form that is able to recruit to membranes different sets of downstream effectors directly responsible for vesicle formation, movement, tethering and fusion. RAB34 transports protein involved in the redistribution of lysosomes to the peri-Golgi region. Plays a role in the maturation of phagosomes that engulf pathogens, such as S.aureus and M.tuberculosis. Plays a role in the fusion of phagosomes with lysosomes. Required for the early steps of intracellular ciliogenesis, the cilium assembly pathway initiated by trafficking and docking of ciliary vesicles to the centrioles in the cytoplasm, followed by axoneme formation in the cytoplasm. After axoneme elongation, the centrioles migrate close to the cell surface so that ciliary vesicles can fuse with the plasma membrane to expose cilia to the extracellular space. It seems dispensable for ciliogenesis via the extracellular pathway where cilium assembly begins after migration and docking of the centriole to the plasma membrane. Also acts as a positive regulator of hedgehog signaling and regulates ciliary function. This is Ras-related protein Rab-34 (RAB34) from Sus scrofa (Pig).